Reading from the N-terminus, the 560-residue chain is MARPDDEVGPAVAPGHPLGKGYLPVPKGAPDGEARLVPQNGPEALNGGPVLDPLVAGAQDGPQALIAAEEETQARLLPAGDGEDVPCPACPPRTALSPRRFVVLLIFSLYSLVNAFQWIQYSSISNVFEDFYEVSPLHINWLSMVYMVAYVPLIFPATWLLDTRGLRLTALLGSGLNCLGAWVKCGSVQRHLFWVTMLGQILCSVAQVFILGLPSPVASVWFGPKEVSTACATAVLGNQLGTAVGFLLPPVLVPALGTQNNTGLLAHTQNNTDLLAHNINTMFYGTAFISTFLFFLTVIAFKEKPPLPPSQAQAILRDSPPEEYSYKSSIWNLCRNIPFVLLLVSYGIMTGAFYSISTLLNQIILTYYVGEEVNAGRIGLTLVVAGMVGSILCGLWLDYTKTYKQTTLIVYVLSFIGMLIFTFTLNLGYIVALFFTGGILGFFMTGYLPLGFEFAVEITYPESEGMSSGLLNTAAQILGIFFTLAQGKITTDYNSPEAGNIFLCAWMFVGIILTALIKSDLRRHNINTGLTNIDVKAVPVDSRVDPKPKAMVSIQSESSL.

Residues 1–43 (MARPDDEVGPAVAPGHPLGKGYLPVPKGAPDGEARLVPQNGPE) form a disordered region. The Cytoplasmic segment spans residues 1-92 (MARPDDEVGP…EDVPCPACPP (92 aa)). Residues 93–117 (RTALSPRRFVVLLIFSLYSLVNAFQ) traverse the membrane as a helical segment. Residues 118-135 (WIQYSSISNVFEDFYEVS) lie on the Extracellular side of the membrane. A helical membrane pass occupies residues 136–163 (PLHINWLSMVYMVAYVPLIFPATWLLDT). Residues 164 to 165 (RG) are Cytoplasmic-facing. The chain crosses the membrane as a helical span at residues 166–185 (LRLTALLGSGLNCLGAWVKC). The Extracellular segment spans residues 186 to 192 (GSVQRHL). Residues 193–221 (FWVTMLGQILCSVAQVFILGLPSPVASVW) form a helical membrane-spanning segment. Residue Q207 coordinates ethanolamine. Residues 222–226 (FGPKE) lie on the Cytoplasmic side of the membrane. The helical transmembrane segment at 227 to 252 (VSTACATAVLGNQLGTAVGFLLPPVL) threads the bilayer. The Extracellular segment spans residues 253–270 (VPALGTQNNTGLLAHTQN). N270 is a glycosylation site (N-linked (GlcNAc...) asparagine). The helical transmembrane segment at 271–300 (NTDLLAHNINTMFYGTAFISTFLFFLTVIA) threads the bilayer. The Cytoplasmic portion of the chain corresponds to 301 to 336 (FKEKPPLPPSQAQAILRDSPPEEYSYKSSIWNLCRN). Residues 337–367 (IPFVLLLVSYGIMTGAFYSISTLLNQIILTY) form a helical membrane-spanning segment. The Extracellular segment spans residues 368-371 (YVGE). The chain crosses the membrane as a helical span at residues 372 to 400 (EVNAGRIGLTLVVAGMVGSILCGLWLDYT). Over 401–402 (KT) the chain is Cytoplasmic. Residues 403 to 425 (YKQTTLIVYVLSFIGMLIFTFTL) traverse the membrane as a helical segment. Residues 426-428 (NLG) are Extracellular-facing. A helical membrane pass occupies residues 429-458 (YIVALFFTGGILGFFMTGYLPLGFEFAVEI). The Cytoplasmic portion of the chain corresponds to 459 to 466 (TYPESEGM). Residues 467–492 (SSGLLNTAAQILGIFFTLAQGKITTD) traverse the membrane as a helical segment. Q476 contacts ethanolamine. Q476 contributes to the choline binding site. Over 493 to 495 (YNS) the chain is Extracellular. A helical transmembrane segment spans residues 496–518 (PEAGNIFLCAWMFVGIILTALIK). Residues 519–560 (SDLRRHNINTGLTNIDVKAVPVDSRVDPKPKAMVSIQSESSL) lie on the Cytoplasmic side of the membrane. S542 is modified (phosphoserine).

It belongs to the major facilitator superfamily. Feline leukemia virus subgroup C receptor (TC 2.A.1.28.1) family.

Its subcellular location is the cell membrane. The catalysed reaction is choline(out) = choline(in). It catalyses the reaction ethanolamine(in) = ethanolamine(out). It carries out the reaction heme b(in) = heme b(out). Functionally, uniporter that mediates the transport of extracellular choline and ethanolamine into cells, thereby playing a key role in phospholipid biosynthesis. Choline and ethanolamine are the precursors of phosphatidylcholine and phosphatidylethanolamine, respectively, the two most abundant phospholipids. Transport is not coupled with proton transport and is exclusively driven by the choline (or ethanolamine) gradient across the plasma membrane. Also acts as a heme b transporter that mediates heme efflux from the cytoplasm to the extracellular compartment. The polypeptide is Choline/ethanolamine transporter FLVCR1 (Flvcr1) (Mus terricolor (Earth-colored mouse)).